The chain runs to 129 residues: Follitropin subunit beta (129 aa).

The signal sequence occupies residues M1–C18. Disulfide bonds link C21/C69, C35/C84, C38/C122, C46/C100, C50/C102, and C105/C112. Residues N25 and N42 are each glycosylated (N-linked (GlcNAc...) asparagine).

The protein belongs to the glycoprotein hormones subunit beta family. As to quaternary structure, heterodimer. The active follitropin is a heterodimer composed of an alpha chain/CGA shared with other hormones and a unique beta chain/FSHB shown here.

The protein localises to the secreted. In terms of biological role, together with the alpha chain CGA constitutes follitropin, the follicle-stimulating hormone, and provides its biological specificity to the hormone heterodimer. Binds FSHR, a G protein-coupled receptor, on target cells to activate downstream signaling pathways. Follitropin is involved in follicle development and spermatogenesis in reproductive organs. The sequence is that of Follitropin subunit beta (FSHB) from Panthera tigris altaica (Siberian tiger).